Here is a 423-residue protein sequence, read N- to C-terminus: Histidine--tRNA ligase (423 aa).

It belongs to the class-II aminoacyl-tRNA synthetase family. In terms of assembly, homodimer.

It is found in the cytoplasm. The catalysed reaction is tRNA(His) + L-histidine + ATP = L-histidyl-tRNA(His) + AMP + diphosphate + H(+). This chain is Histidine--tRNA ligase, found in Haemophilus influenzae (strain PittEE).